Consider the following 237-residue polypeptide: Ribonuclease PH (237 aa).

Residues arginine 86 and 124–126 (GTR) contribute to the phosphate site.

The protein belongs to the RNase PH family. Homohexameric ring arranged as a trimer of dimers.

It catalyses the reaction tRNA(n+1) + phosphate = tRNA(n) + a ribonucleoside 5'-diphosphate. Its function is as follows. Phosphorolytic 3'-5' exoribonuclease that plays an important role in tRNA 3'-end maturation. Removes nucleotide residues following the 3'-CCA terminus of tRNAs; can also add nucleotides to the ends of RNA molecules by using nucleoside diphosphates as substrates, but this may not be physiologically important. Probably plays a role in initiation of 16S rRNA degradation (leading to ribosome degradation) during starvation. This chain is Ribonuclease PH, found in Shewanella loihica (strain ATCC BAA-1088 / PV-4).